The following is a 431-amino-acid chain: Glutamate--tRNA ligase 1 (431 aa).

The 'HIGH' region signature appears at 6–16 (PSPTGDMHIGN). The short motif at 235–239 (KMSKR) is the 'KMSKS' region element. Lys-238 is an ATP binding site.

Belongs to the class-I aminoacyl-tRNA synthetase family. Glutamate--tRNA ligase type 1 subfamily. As to quaternary structure, monomer.

Its subcellular location is the cytoplasm. The catalysed reaction is tRNA(Glu) + L-glutamate + ATP = L-glutamyl-tRNA(Glu) + AMP + diphosphate. Catalyzes the attachment of glutamate to tRNA(Glu) in a two-step reaction: glutamate is first activated by ATP to form Glu-AMP and then transferred to the acceptor end of tRNA(Glu). The protein is Glutamate--tRNA ligase 1 of Nitratiruptor sp. (strain SB155-2).